Consider the following 631-residue polypeptide: Glutamyl-tRNA(Gln) amidotransferase subunit E (631 aa).

It belongs to the GatB/GatE family. GatE subfamily. In terms of assembly, heterodimer of GatD and GatE.

The enzyme catalyses L-glutamyl-tRNA(Gln) + L-glutamine + ATP + H2O = L-glutaminyl-tRNA(Gln) + L-glutamate + ADP + phosphate + H(+). Functionally, allows the formation of correctly charged Gln-tRNA(Gln) through the transamidation of misacylated Glu-tRNA(Gln) in organisms which lack glutaminyl-tRNA synthetase. The reaction takes place in the presence of glutamine and ATP through an activated gamma-phospho-Glu-tRNA(Gln). The GatDE system is specific for glutamate and does not act on aspartate. This is Glutamyl-tRNA(Gln) amidotransferase subunit E from Methanococcus maripaludis (strain DSM 14266 / JCM 13030 / NBRC 101832 / S2 / LL).